Reading from the N-terminus, the 172-residue chain is NADH-ubiquinone oxidoreductase chain 6 (172 aa).

5 consecutive transmembrane segments (helical) span residues 1-21, 25-45, 53-73, 86-106, and 140-160; these read MTYFMFLLLMALVVGLVAVAS, PYFAALGLVVAAGVGCGVLVG, LVLFLIYLGGMLVVFAYAALA, VLGYVLVYLLGVGLVAGIFWG, and GGMLVICAWVLLLTLLVVLEL.

It belongs to the complex I subunit 6 family.

The protein resides in the mitochondrion membrane. It carries out the reaction a ubiquinone + NADH + 5 H(+)(in) = a ubiquinol + NAD(+) + 4 H(+)(out). Core subunit of the mitochondrial membrane respiratory chain NADH dehydrogenase (Complex I) that is believed to belong to the minimal assembly required for catalysis. Complex I functions in the transfer of electrons from NADH to the respiratory chain. The immediate electron acceptor for the enzyme is believed to be ubiquinone. The sequence is that of NADH-ubiquinone oxidoreductase chain 6 (MT-ND6) from Cyprinus carpio (Common carp).